A 637-amino-acid chain; its full sequence is Transcription factor PHYTOCHROME INTERACTING FACTOR-LIKE 15 (637 aa).

Positions 35 to 46 (FFGGTGGGGGGS) are enriched in gly residues. 3 disordered regions span residues 35 to 54 (FFGG…QERQ), 146 to 213 (ASLP…EGVM), and 356 to 397 (ECSA…RRRR). Residues 149–170 (PASNHNGATNNRNAPVATTTTR) are compositionally biased toward polar residues. Residues 384 to 397 (RTAEVHNLSERRRR) form a basic motif region. Positions 384 to 397 (RTAEVHNLSERRRR) are enriched in basic and acidic residues. The region spanning 384 to 433 (RTAEVHNLSERRRRDRINEKMRALQELIPNCNKIDKASMLDEAIEYLKTL) is the bHLH domain. A helix-loop-helix motif region spans residues 398–433 (DRINEKMRALQELIPNCNKIDKASMLDEAIEYLKTL). The disordered stretch occupies residues 601–637 (GDNENFRIPSSAQTKSSQFSDGTGKGTNARERDGAET). Residues 608–621 (IPSSAQTKSSQFSD) show a composition bias toward polar residues. Over residues 628 to 637 (NARERDGAET) the composition is skewed to basic and acidic residues.

This sequence belongs to the bHLH protein family. Interacts with LF and PRR1.

It is found in the nucleus. Its function is as follows. Transcription factor that may act as negative regulator of phyB-dependent light signal transduction. The chain is Transcription factor PHYTOCHROME INTERACTING FACTOR-LIKE 15 from Oryza sativa subsp. japonica (Rice).